A 270-amino-acid polypeptide reads, in one-letter code: Chlorophyll a-b binding protein 7, chloroplastic (270 aa).

Residues 1–42 (MASACASSTIAAVAFSSPSSRRNGSIVGTTKASFLGGRRLRV) constitute a chloroplast transit peptide. Trp68 is a chlorophyll b binding site. Chlorophyll a is bound by residues Phe88, Glu107, and His110. Arg112 is a chlorophyll b binding site. A helical membrane pass occupies residues 113–133 (WAMLGAAGIFIPELLTKIGIL). Gln144 lines the chlorophyll a pocket. The chain crosses the membrane as a helical span at residues 146-166 (YFTDTTTLFIVELVLIGWAEG). 3 residues coordinate chlorophyll b: Ile155, Glu165, and Arg168. Residues Lys221, Glu222, Asn225, Arg227, Gln239, and His254 each contribute to the chlorophyll a site. The helical transmembrane segment at 228 to 248 (LAMLAVMGAWFQHIYTGTGPI) threads the bilayer.

Belongs to the light-harvesting chlorophyll a/b-binding (LHC) protein family. The LHC complex consists of chlorophyll a-b binding proteins. It depends on Binds at least 14 chlorophylls (8 Chl-a and 6 Chl-b) and carotenoids such as lutein and neoxanthin. as a cofactor. Post-translationally, photoregulated by reversible phosphorylation of its threonine residues.

The protein localises to the plastid. It localises to the chloroplast thylakoid membrane. In terms of biological role, the light-harvesting complex (LHC) functions as a light receptor, it captures and delivers excitation energy to photosystems with which it is closely associated. This is Chlorophyll a-b binding protein 7, chloroplastic (CAB7) from Solanum lycopersicum (Tomato).